Here is a 210-residue protein sequence, read N- to C-terminus: Molybdenum cofactor guanylyltransferase (210 aa).

Residues 9-11 (LAG), lysine 21, aspartate 66, and aspartate 95 contribute to the GTP site. Aspartate 95 contacts Mg(2+).

The protein belongs to the MobA family. In terms of assembly, monomer. Requires Mg(2+) as cofactor.

It localises to the cytoplasm. The enzyme catalyses Mo-molybdopterin + GTP + H(+) = Mo-molybdopterin guanine dinucleotide + diphosphate. In terms of biological role, transfers a GMP moiety from GTP to Mo-molybdopterin (Mo-MPT) cofactor (Moco or molybdenum cofactor) to form Mo-molybdopterin guanine dinucleotide (Mo-MGD) cofactor. This is Molybdenum cofactor guanylyltransferase from Syntrophotalea carbinolica (strain DSM 2380 / NBRC 103641 / GraBd1) (Pelobacter carbinolicus).